Consider the following 477-residue polypeptide: Bifunctional protein HldE (477 aa).

Residues 1–318 form a ribokinase region; the sequence is MKVTLPEFER…ENAVRGRADT (318 aa). N6-acetyllysine is present on K179. 195–198 lines the ATP pocket; the sequence is NLSE. D264 is a catalytic residue. Residues 344 to 477 form a cytidylyltransferase region; that stretch reads MTNGVFDILH…IKKIQQDKKG (134 aa).

The protein in the N-terminal section; belongs to the carbohydrate kinase PfkB family. It in the C-terminal section; belongs to the cytidylyltransferase family. Homodimer.

The catalysed reaction is D-glycero-beta-D-manno-heptose 7-phosphate + ATP = D-glycero-beta-D-manno-heptose 1,7-bisphosphate + ADP + H(+). It carries out the reaction D-glycero-beta-D-manno-heptose 1-phosphate + ATP + H(+) = ADP-D-glycero-beta-D-manno-heptose + diphosphate. It participates in nucleotide-sugar biosynthesis; ADP-L-glycero-beta-D-manno-heptose biosynthesis; ADP-L-glycero-beta-D-manno-heptose from D-glycero-beta-D-manno-heptose 7-phosphate: step 1/4. Its pathway is nucleotide-sugar biosynthesis; ADP-L-glycero-beta-D-manno-heptose biosynthesis; ADP-L-glycero-beta-D-manno-heptose from D-glycero-beta-D-manno-heptose 7-phosphate: step 3/4. In terms of biological role, catalyzes the phosphorylation of D-glycero-D-manno-heptose 7-phosphate at the C-1 position to selectively form D-glycero-beta-D-manno-heptose-1,7-bisphosphate. Functionally, catalyzes the ADP transfer from ATP to D-glycero-beta-D-manno-heptose 1-phosphate, yielding ADP-D-glycero-beta-D-manno-heptose. The chain is Bifunctional protein HldE from Escherichia fergusonii (strain ATCC 35469 / DSM 13698 / CCUG 18766 / IAM 14443 / JCM 21226 / LMG 7866 / NBRC 102419 / NCTC 12128 / CDC 0568-73).